We begin with the raw amino-acid sequence, 257 residues long: 3-deoxy-manno-octulosonate cytidylyltransferase (257 aa).

This sequence belongs to the KdsB family.

The protein localises to the cytoplasm. It catalyses the reaction 3-deoxy-alpha-D-manno-oct-2-ulosonate + CTP = CMP-3-deoxy-beta-D-manno-octulosonate + diphosphate. It functions in the pathway nucleotide-sugar biosynthesis; CMP-3-deoxy-D-manno-octulosonate biosynthesis; CMP-3-deoxy-D-manno-octulosonate from 3-deoxy-D-manno-octulosonate and CTP: step 1/1. The protein operates within bacterial outer membrane biogenesis; lipopolysaccharide biosynthesis. In terms of biological role, activates KDO (a required 8-carbon sugar) for incorporation into bacterial lipopolysaccharide in Gram-negative bacteria. The protein is 3-deoxy-manno-octulosonate cytidylyltransferase of Stenotrophomonas maltophilia (strain K279a).